Here is a 421-residue protein sequence, read N- to C-terminus: Gamma-glutamyl phosphate reductase (421 aa).

The protein belongs to the gamma-glutamyl phosphate reductase family.

The protein resides in the cytoplasm. The catalysed reaction is L-glutamate 5-semialdehyde + phosphate + NADP(+) = L-glutamyl 5-phosphate + NADPH + H(+). It functions in the pathway amino-acid biosynthesis; L-proline biosynthesis; L-glutamate 5-semialdehyde from L-glutamate: step 2/2. Its function is as follows. Catalyzes the NADPH-dependent reduction of L-glutamate 5-phosphate into L-glutamate 5-semialdehyde and phosphate. The product spontaneously undergoes cyclization to form 1-pyrroline-5-carboxylate. In Pseudomonas fluorescens (strain SBW25), this protein is Gamma-glutamyl phosphate reductase.